The primary structure comprises 1140 residues: Multiple epidermal growth factor-like domains protein 10 (1140 aa).

The signal sequence occupies residues 1–25 (MVISLNSCLSFICLLLCHWIGTASP). The tract at residues 1–857 (MVISLNSCLS…ALPADSYQIG (857 aa)) is necessary for interaction with AP2M1, self-assembly and formation of the irregular, mosaic-like adhesion pattern. The Extracellular segment spans residues 26 to 857 (LNLEDPNVCS…ALPADSYQIG (832 aa)). The EMI domain maps to 30–107 (DPNVCSHWES…FYESGEMCVP (78 aa)). 48 cysteine pairs are disulfide-bonded: C34–C95, C60–C69, C94–C105, C109–C118, C113–C124, C126–C135, C148–C160, C154–C167, C169–C178, C191–C203, C197–C210, C212–C221, C234–C246, C240–C253, C255–C264, C281–C289, C283–C296, C298–C307, C320–C332, C326–C339, C341–C350, C409–C421, C415–C428, C430–C439, C456–C464, C458–C471, C473–C482, C495–C507, C501–C514, C516–C525, C542–C550, C544–C557, C559–C568, C581–C593, C587–C600, C602–C611, C669–C681, C675–C688, C690–C699, C716–C724, C718–C731, C733–C742, C755–C767, C761–C774, C776–C785, C802–C810, C804–C817, and C819–C828. EGF-like domains lie at 106 to 136 (VPHCADKCVHGRCIAPNTCQCEPGWGGTNCS), 144 to 179 (WGPHCTSRCQCKNGALCNPITGACHCAAGFRGWRCE), 187 to 222 (YGNDCHQRCQCQNGATCDHVTGECRCPPGYTGAFCE), 230 to 265 (HGPQCEQRCPCQNGGVCHHVTGECSCPSGWMGTVCG), 278 to 308 (SQECQCHNGGTCDAATGQCHCSPGYTGERCQ), 316 to 351 (YGVLCAETCQCVNGGKCYHVSGACLCEAGFAGERCE), 405 to 440 (YGEACQQICSCQNGADCDSVTGKCTCAPGFKGIDCS), 453 to 483 (SSRCGCKNDAVCSPVDGSCTCKAGWHGVDCS), 491 to 526 (WGFGCNLTCQCLNGGACNTLDGTCTCAPGWRGEKCE), 539 to 569 (AERCDCSHADGCHPTTGHCRCLPGWSGVHCD), 577 to 612 (WGPNCSLPCYCKNGASCSPDDGICECAPGFRGTTCQ), 665 to 700 (FGKNCAGICTCTNNGTCNPIDRSCQCYPGWIGSDCS), 713 to 743 (IHTCNCHNGAFCSAYDGECKCTPGWTGLYCT), 751 to 786 (YGKDCALICQCQNGADCDHISGQCTCRTGFMGRHCE), and 799 to 829 (RQICDCLNNSTCDHITGTCYCSPGWKGARCD). N134 carries an N-linked (GlcNAc...) asparagine glycan. A glycan (N-linked (GlcNAc...) asparagine) is linked at N496. Residues 858 to 878 (AIAGIIILVLVVLFLLALFII) form a helical membrane-spanning segment. Residues 879–1140 (YRHKQKGKES…SSSNSSSSSE (262 aa)) are Cytoplasmic-facing. Positions 945–1140 (RDRMTVTKSK…SSSNSSSSSE (196 aa)) are necessary for formation of large intracellular vacuoles. Residue Y1030 is modified to Phosphotyrosine; by SRC. A disordered region spans residues 1111–1140 (YDLLPVRDSSSSPKQEDSGGSSSNSSSSSE). Positions 1128–1140 (SGGSSSNSSSSSE) are enriched in low complexity.

Belongs to the MEGF family. In terms of assembly, homomer. Interacts with GULP1 and ABCA1. Interacts with AP2M1. Does not interact with MEGF11. Binds with high affinity to complement C1q. Interacts (via the cytoplasmic domain) with NOTCH1 (via NICD domain). In terms of processing, phosphorylated on tyrosine residues. Phosphorylation at Tyr-1030 may be important for muscle cell proliferation. Post-translationally, ubiquitinated; mono- and polyubiquitinated forms are detected. As to expression, expressed in muscle (at protein level).

Its subcellular location is the cell membrane. It localises to the cell projection. The protein localises to the phagocytic cup. Membrane receptor involved in phagocytosis by macrophages and astrocytes of apoptotic cells. Receptor for C1q, an eat-me signal, that binds phosphatidylserine expressed on the surface of apoptotic cells. Cooperates with ABCA1 within the process of engulfment. Promotes the formation of large intracellular vacuoles and may be responsible for the uptake of amyloid-beta peptides. Necessary for astrocyte-dependent apoptotic neuron clearance in the developing cerebellum. Plays role in muscle cell proliferation, adhesion and motility. Is also an essential factor in the regulation of myogenesis. Controls the balance between skeletal muscle satellite cells proliferation and differentiation through regulation of the notch signaling pathway. May also function in the mosaic spacing of specific neuron subtypes in the retina through homotypic retinal neuron repulsion. Mosaics provide a mechanism to distribute each cell type evenly across the retina, ensuring that all parts of the visual field have access to a full set of processing elements. This chain is Multiple epidermal growth factor-like domains protein 10, found in Homo sapiens (Human).